The sequence spans 247 residues: Cell division protein ZapD (247 aa).

Belongs to the ZapD family. In terms of assembly, interacts with FtsZ.

It is found in the cytoplasm. Cell division factor that enhances FtsZ-ring assembly. Directly interacts with FtsZ and promotes bundling of FtsZ protofilaments, with a reduction in FtsZ GTPase activity. This Salmonella agona (strain SL483) protein is Cell division protein ZapD.